The following is a 184-amino-acid chain: NADH-quinone oxidoreductase subunit B (184 aa).

Residues Cys37, Cys38, Cys103, and Cys132 each coordinate [4Fe-4S] cluster.

It belongs to the complex I 20 kDa subunit family. NDH-1 is composed of 14 different subunits. Subunits NuoB, C, D, E, F, and G constitute the peripheral sector of the complex. [4Fe-4S] cluster is required as a cofactor.

The protein resides in the cell membrane. It catalyses the reaction a quinone + NADH + 5 H(+)(in) = a quinol + NAD(+) + 4 H(+)(out). NDH-1 shuttles electrons from NADH, via FMN and iron-sulfur (Fe-S) centers, to quinones in the respiratory chain. The immediate electron acceptor for the enzyme in this species is believed to be a menaquinone. Couples the redox reaction to proton translocation (for every two electrons transferred, four hydrogen ions are translocated across the cytoplasmic membrane), and thus conserves the redox energy in a proton gradient. The chain is NADH-quinone oxidoreductase subunit B from Mycolicibacterium vanbaalenii (strain DSM 7251 / JCM 13017 / BCRC 16820 / KCTC 9966 / NRRL B-24157 / PYR-1) (Mycobacterium vanbaalenii).